A 258-amino-acid polypeptide reads, in one-letter code: Small ribosomal subunit protein uS2 (258 aa).

The disordered stretch occupies residues 226-258 (KQGQDDEETLEVDFKENADGSEEIVSAEENPED). The span at 244–258 (DGSEEIVSAEENPED) shows a compositional bias: acidic residues.

It belongs to the universal ribosomal protein uS2 family.

In Lactobacillus acidophilus (strain ATCC 700396 / NCK56 / N2 / NCFM), this protein is Small ribosomal subunit protein uS2.